The sequence spans 418 residues: uncharacterized protein (418 aa).

This is an uncharacterized protein from Escherichia coli O157:H7.